Consider the following 62-residue polypeptide: Putative antitoxin AF_1095 (62 aa).

The protein belongs to the UPF0165 family.

Functionally, possibly the antitoxin component of a type II toxin-antitoxin (TA) system. The sequence is that of Putative antitoxin AF_1095 from Archaeoglobus fulgidus (strain ATCC 49558 / DSM 4304 / JCM 9628 / NBRC 100126 / VC-16).